A 175-amino-acid chain; its full sequence is Peptide deformylase (175 aa).

Positions 96 and 138 each coordinate Fe cation. The active site involves glutamate 139. Histidine 142 is a Fe cation binding site.

This sequence belongs to the polypeptide deformylase family. It depends on Fe(2+) as a cofactor.

It carries out the reaction N-terminal N-formyl-L-methionyl-[peptide] + H2O = N-terminal L-methionyl-[peptide] + formate. Removes the formyl group from the N-terminal Met of newly synthesized proteins. Requires at least a dipeptide for an efficient rate of reaction. N-terminal L-methionine is a prerequisite for activity but the enzyme has broad specificity at other positions. This chain is Peptide deformylase, found in Rhodopseudomonas palustris (strain ATCC BAA-98 / CGA009).